Here is a 434-residue protein sequence, read N- to C-terminus: Enolase (434 aa).

Q168 is a binding site for (2R)-2-phosphoglycerate. E210 acts as the Proton donor in catalysis. Positions 247, 292, and 319 each coordinate Mg(2+). Residues K344, R373, S374, and K395 each coordinate (2R)-2-phosphoglycerate. K344 acts as the Proton acceptor in catalysis.

It belongs to the enolase family. It depends on Mg(2+) as a cofactor.

It localises to the cytoplasm. The protein localises to the secreted. It is found in the cell surface. The catalysed reaction is (2R)-2-phosphoglycerate = phosphoenolpyruvate + H2O. Its pathway is carbohydrate degradation; glycolysis; pyruvate from D-glyceraldehyde 3-phosphate: step 4/5. Its function is as follows. Catalyzes the reversible conversion of 2-phosphoglycerate (2-PG) into phosphoenolpyruvate (PEP). It is essential for the degradation of carbohydrates via glycolysis. The sequence is that of Enolase from Endomicrobium trichonymphae.